Reading from the N-terminus, the 825-residue chain is Probable inorganic carbon transporter subunit DabA (825 aa).

Residues cysteine 334, aspartate 336, histidine 521, and cysteine 536 each coordinate Zn(2+).

Belongs to the inorganic carbon transporter (TC 9.A.2) DabA family. Forms a complex with DabB. It depends on Zn(2+) as a cofactor.

It is found in the cell inner membrane. Part of an energy-coupled inorganic carbon pump. In Acidithiobacillus ferrooxidans (strain ATCC 23270 / DSM 14882 / CIP 104768 / NCIMB 8455) (Ferrobacillus ferrooxidans (strain ATCC 23270)), this protein is Probable inorganic carbon transporter subunit DabA.